A 484-amino-acid chain; its full sequence is Cysteine--tRNA ligase (484 aa).

Zn(2+) is bound at residue cysteine 29. The 'HIGH' region motif lies at 31–41 (ITVYDYCHLGH). 3 residues coordinate Zn(2+): cysteine 215, histidine 240, and glutamate 244. Residues 272-276 (KMSKS) carry the 'KMSKS' region motif. An ATP-binding site is contributed by lysine 275.

The protein belongs to the class-I aminoacyl-tRNA synthetase family. As to quaternary structure, monomer. Zn(2+) is required as a cofactor.

The protein resides in the cytoplasm. It catalyses the reaction tRNA(Cys) + L-cysteine + ATP = L-cysteinyl-tRNA(Cys) + AMP + diphosphate. The chain is Cysteine--tRNA ligase from Rippkaea orientalis (strain PCC 8801 / RF-1) (Cyanothece sp. (strain PCC 8801)).